The primary structure comprises 84 residues: Small ribosomal subunit protein eS27-like (84 aa).

The span at Met1–Lys16 shows a compositional bias: basic and acidic residues. The segment at Met1–Arg23 is disordered. The C4-type zinc-finger motif lies at Pro38 to Ser60.

It belongs to the eukaryotic ribosomal protein eS27 family. It depends on Zn(2+) as a cofactor.

The polypeptide is Small ribosomal subunit protein eS27-like (RPS27L) (Bos taurus (Bovine)).